A 382-amino-acid polypeptide reads, in one-letter code: Putative phospholipase A1 (382 aa).

The signal sequence occupies residues 1-27 (MPTMGAEMNTRNMRYILLTGLLPMASA). The Periplasmic portion of the chain corresponds to 28-65 (FGETALQCAALTDNVTRLACYDRIFAAQLPSSAGQEGQ). A beta stranded transmembrane segment spans residues 66–78 (ESKAVLNLTETVR). The Extracellular portion of the chain corresponds to 79–168 (SSLDKGEAVI…VQEKFGQQKR (90 aa)). Residues 169 to 183 (AETKLQVSFKSKIAE) form a beta stranded membrane-spanning segment. Over 184-189 (DLFKTR) the chain is Periplasmic. A beta stranded transmembrane segment spans residues 190–202 (ADLWFGYTQRSDW). The Extracellular portion of the chain corresponds to 203 to 213 (QIYNQGRKSAP). A Ca(2+)-binding site is contributed by serine 211. The beta stranded transmembrane segment at 214–233 (FRNTDYKPEIFLTQPVKADL) threads the bilayer. Residues 234–236 (PFG) are Periplasmic-facing. The chain crosses the membrane as a beta stranded span at residues 237 to 250 (GRLRMLGAGFVHQS). Catalysis depends on histidine 248, which acts as the Proton acceptor. Serine 250 (nucleophile) is an active-site residue. Topologically, residues 251–259 (NGQSRPESR) are extracellular. A Ca(2+)-binding site is contributed by serine 258. The beta stranded transmembrane segment at 260–272 (SWNRIYAMAGMEW) threads the bilayer. Topologically, residues 273 to 274 (GK) are periplasmic. A beta stranded transmembrane segment spans residues 275–284 (LTVIPRVWVR). Residues 285 to 306 (AFDQSGDKNDNPDIADYMGYGD) lie on the Extracellular side of the membrane. Residue aspartate 294 participates in Ca(2+) binding. The beta stranded transmembrane segment at 307–313 (VKLQYRL) threads the bilayer. At 314–315 (ND) the chain is on the periplasmic side. A beta stranded membrane pass occupies residues 316–325 (RQNVYSVLRY). Over 326-332 (NPKTGYG) the chain is Extracellular. A beta stranded transmembrane segment spans residues 333-341 (AIEAAYTFP). Residues 342-346 (IKGKL) are Periplasmic-facing. The chain crosses the membrane as a beta stranded span at residues 347-356 (KGVVRGFHGY). Residues 357 to 365 (GESLIDYNH) lie on the Extracellular side of the membrane. Residues 366–377 (KQNGIGIGLMFN) form a beta stranded membrane-spanning segment. Over 378–382 (DLDGI) the chain is Periplasmic.

Belongs to the phospholipase A1 family. In terms of assembly, homodimer; dimerization is reversible, and the dimeric form is the active one. Requires Ca(2+) as cofactor.

Its subcellular location is the cell outer membrane. It catalyses the reaction a 1,2-diacyl-sn-glycero-3-phosphocholine + H2O = a 2-acyl-sn-glycero-3-phosphocholine + a fatty acid + H(+). The catalysed reaction is a 1,2-diacyl-sn-glycero-3-phosphocholine + H2O = a 1-acyl-sn-glycero-3-phosphocholine + a fatty acid + H(+). In terms of biological role, hydrolysis of phosphatidylcholine with phospholipase A2 (EC 3.1.1.4) and phospholipase A1 (EC 3.1.1.32) activities. This Neisseria meningitidis serogroup B (strain ATCC BAA-335 / MC58) protein is Putative phospholipase A1.